Reading from the N-terminus, the 102-residue chain is Small ribosomal subunit protein uS10 (102 aa).

It belongs to the universal ribosomal protein uS10 family. Part of the 30S ribosomal subunit.

Involved in the binding of tRNA to the ribosomes. This chain is Small ribosomal subunit protein uS10, found in Sulfolobus acidocaldarius (strain ATCC 33909 / DSM 639 / JCM 8929 / NBRC 15157 / NCIMB 11770).